Consider the following 523-residue polypeptide: Nuclear receptor ROR-alpha (523 aa).

Positions 1-26 (MESAPAAPDPAASEPGSSGSEAAAGS) are enriched in low complexity. Residues 1–63 (MESAPAAPDP…SRGISVTKKT (63 aa)) are disordered. Lys38 is modified (N6-methyllysine). 2 consecutive NR C4-type zinc fingers follow at residues 73-93 (CKIC…CEGC) and 109-133 (CPRQ…LQKC). Residues 73–138 (CKICGDKSSG…RLQKCLAVGM (66 aa)) constitute a DNA-binding region (nuclear receptor). The segment at 154–183 (DSLYAEVQKHRMQQQQRDHQQQPGEAEPLT) is disordered. Thr183 bears the Phosphothreonine; by MAPK1 mark. Residue Lys240 forms a Glycyl lysine isopeptide (Lys-Gly) (interchain with G-Cter in SUMO) linkage. In terms of domain architecture, NR LBD spans 272 to 510 (ELEHLAQNIS…LHFPPLYKEL (239 aa)). The AF-2 signature appears at 506 to 511 (LYKELF).

It belongs to the nuclear hormone receptor family. NR1 subfamily. Monomer. Interacts (via the DNA-binding domain) with HIF1A; the interaction enhances HIF1A transcription under hypoxia through increasing protein stability. Interacts with CEBPB; the interaction disrupts the interaction CEBPB:EP300. Interacts with the coactivators NCOA2, PPARGC1A (via LXXLL motif), EP300 and MED1. Interacts with the corepressor NCOR1. Interacts with MAGED1 and CTNNB1. Interacts with CRY1 and PER2. Interacts (via AF-2 motif) with PROX1. Interacts with NRIP1. Isoform 4 interacts (via AF-2 motif) with isoform 1 of FOXP3 (via LXXLL motif). Phosphorylation by conventional PKCs in neurons inhibits transcriptional activity. Phosphorylated on Thr-183 by MAPK1/ERK1 in vitro. In terms of processing, sumoylated by SENP1 and SENP2. Sumoylation, promoted by PIAS2, PIAS3, PIAS4 but not PIAS1, enhances the transcriptional activity. Desumoylated by SENP1. Post-translationally, ubiquitinated, leading to its degradation by the proteasome. Proteasomal degradation is required for efficient transcriptional activity and is prevented by HR. Monomethylated at Lys-38 by EZH2, this creates a degron recognized by a DCX (DDB1-DCAF1/VPRBP-CUL4A-RBX1) E3 ubiquitin ligase complex. As to expression, expressed in cerebellum, heart, liver, lung, kidney, retina and brown and white adipose tissues. Expressed in the subset of mature Th17 cells.

Its subcellular location is the nucleus. Nuclear receptor that binds DNA as a monomer to ROR response elements (RORE) containing a single core motif half-site 5'-AGGTCA-3' preceded by a short A-T-rich sequence. Key regulator of embryonic development, cellular differentiation, immunity, circadian rhythm as well as lipid, steroid, xenobiotics and glucose metabolism. Considered to have intrinsic transcriptional activity, have some natural ligands like oxysterols that act as agonists (25-hydroxycholesterol) or inverse agonists (7-oxygenated sterols), enhancing or repressing the transcriptional activity, respectively. Recruits distinct combinations of cofactors to target genes regulatory regions to modulate their transcriptional expression, depending on the tissue, time and promoter contexts. Regulates genes involved in photoreceptor development including OPN1SW, OPN1SM and ARR3 and skeletal muscle development with MYOD1. Required for proper cerebellum development, regulates SHH gene expression, among others, to induce granule cells proliferation as well as expression of genes involved in calcium-mediated signal transduction. Regulates the circadian expression of several clock genes, including CLOCK, BMAL1, NPAS2 and CRY1. Competes with NR1D1 for binding to their shared DNA response element on some clock genes such as BMAL1, CRY1 and NR1D1 itself, resulting in NR1D1-mediated repression or RORA-mediated activation of clock genes expression, leading to the circadian pattern of clock genes expression. Therefore influences the period length and stability of the clock. Regulates genes involved in lipid metabolism such as apolipoproteins APOA1, APOA5, APOC3 and PPARG. In liver, has specific and redundant functions with RORC as positive or negative modulator of expression of genes encoding phase I and phase II proteins involved in the metabolism of lipids, steroids and xenobiotics, such as CYP7B1 and SULT2A1. Induces a rhythmic expression of some of these genes. In addition, interplays functionally with NR1H2 and NR1H3 for the regulation of genes involved in cholesterol metabolism. Also involved in the regulation of hepatic glucose metabolism through the modulation of G6PC1 and PCK1. In adipose tissue, plays a role as negative regulator of adipocyte differentiation, probably acting through dual mechanisms. May suppress CEBPB-dependent adipogenesis through direct interaction and PPARG-dependent adipogenesis through competition for DNA-binding. Downstream of IL6 and TGFB and synergistically with RORC isoform 2, is implicated in the lineage specification of uncommitted CD4(+) T-helper (T(H)) cells into T(H)17 cells, antagonizing the T(H)1 program. Probably regulates IL17 and IL17F expression on T(H) by binding to the essential enhancer conserved non-coding sequence 2 (CNS2) in the IL17-IL17F locus. Involved in hypoxia signaling by interacting with and activating the transcriptional activity of HIF1A. May inhibit cell growth in response to cellular stress. May exert an anti-inflammatory role by inducing CHUK expression and inhibiting NF-kappa-B signaling. This chain is Nuclear receptor ROR-alpha (Rora), found in Mus musculus (Mouse).